A 364-amino-acid chain; its full sequence is Putative glutamate--cysteine ligase 2-2 (364 aa).

This sequence belongs to the glutamate--cysteine ligase type 2 family. YbdK subfamily.

It catalyses the reaction L-cysteine + L-glutamate + ATP = gamma-L-glutamyl-L-cysteine + ADP + phosphate + H(+). ATP-dependent carboxylate-amine ligase which exhibits weak glutamate--cysteine ligase activity. In Mycobacterium sp. (strain JLS), this protein is Putative glutamate--cysteine ligase 2-2.